The chain runs to 580 residues: Acyl-coenzyme A synthetase ACSM4, mitochondrial (580 aa).

The N-terminal 22 residues, Met1–His22, are a transit peptide targeting the mitochondrion. Residues Thr229–Lys237, Glu368–Thr373, Asp455, Arg470, and Lys566 contribute to the ATP site.

This sequence belongs to the ATP-dependent AMP-binding enzyme family. The cofactor is Mg(2+). It depends on Mn(2+) as a cofactor. As to expression, detected in adult olfactory epithelium.

The protein resides in the mitochondrion. It carries out the reaction a medium-chain fatty acid + ATP + CoA = a medium-chain fatty acyl-CoA + AMP + diphosphate. It catalyses the reaction hexanoate + ATP + CoA = hexanoyl-CoA + AMP + diphosphate. The catalysed reaction is octanoate + ATP + CoA = octanoyl-CoA + AMP + diphosphate. The enzyme catalyses decanoate + ATP + CoA = decanoyl-CoA + AMP + diphosphate. It carries out the reaction dodecanoate + ATP + CoA = dodecanoyl-CoA + AMP + diphosphate. Functionally, catalyzes the activation of fatty acids by CoA to produce an acyl-CoA, the first step in fatty acid metabolism. Capable of activating medium-chain fatty acids with a preference for C6-12 fatty acids. The chain is Acyl-coenzyme A synthetase ACSM4, mitochondrial (Acsm4) from Rattus norvegicus (Rat).